The chain runs to 889 residues: Alanine--tRNA ligase (889 aa).

The Zn(2+) site is built by His566, His570, Cys683, and His687.

Belongs to the class-II aminoacyl-tRNA synthetase family. The cofactor is Zn(2+).

It is found in the cytoplasm. The enzyme catalyses tRNA(Ala) + L-alanine + ATP = L-alanyl-tRNA(Ala) + AMP + diphosphate. In terms of biological role, catalyzes the attachment of alanine to tRNA(Ala) in a two-step reaction: alanine is first activated by ATP to form Ala-AMP and then transferred to the acceptor end of tRNA(Ala). Also edits incorrectly charged Ser-tRNA(Ala) and Gly-tRNA(Ala) via its editing domain. The polypeptide is Alanine--tRNA ligase (Herpetosiphon aurantiacus (strain ATCC 23779 / DSM 785 / 114-95)).